Here is a 1178-residue protein sequence, read N- to C-terminus: MVVNAKDSTVPTMEDFKELHNLVTHHIESFDYMTLKGLDVMFNRIKPVSVYDPNTENELSIWLENPLVFAPQKESFKSTSRKEPLLPFECRQAKISYTGTFMADVCFKYNDGVVVRDKFDFGQFPIMLMSKLCSLKGADCRKLLKCKESTSEMGGYFILNGIERVFRCVIAPKRNHPTSMIRNSFRDRKEGYSSKAVVTRCVRDDQSSVTVKLYYLRNGSARVGFWIVGREYLLPVGLVLKALTNSCDEEIYESLNCCYSEHYGRGDGAIGTQLVRERAKIILDEVRDLGLFTREQCRKHLGQHFQPVLDGVKKESLSIVAEAVLRDYLFVHLDNDHDKFNLLIFIIQKLYSLVDQTSLPDNPDSLQNQEILVPGHVITIYLKEKLEEWLRKCKSLLKDELDNTNSKFSFESLADVKKLINKNPPRSIGTSIETLLKTGALKTQSGLDLQQRAGYTVQAERLNFLRFLSFFRAVHRGASFAGLRTTTVRKLLPESWGFLCPVHTPDGTPCGLLNHMTRTSRITSQFDSKGNIRDFLKIRKSVVDVLTGAGMVPSLPKLVRAGPPKVIHVLLDGQVVGTLSSNLVTKVVSYIRRLKVEAPSVIPEDLEVGYVPTSMGGSYPGLYLASCPARFIRPVKNISIPSDNIELIGPFEQVFMEISCPDGGNGGRNNSSLATHEEIHPTGMISVVANLTPWSDHNQSPRNMYQCQMAKQTMAYSTQALQFRADQKIYHLQTPQSPVVRTKTYTTYSIDENPTGTNAIVAVLAHTGFDMEDAMILNKSSVERGMCHGQIYQTENIDLSDQNSRFDSGSKSFRRSTNKAEHFRIDADGLPSVGQKLYPDEPYCSIYDEVTNKTRHMKRKGTDPVIVDFVSVDMKSKKHPQRANIRFRHARNPIIGDKFSSRHGQKGVCSQLWPDIDMPFNGVTGMRPDLIINPHAFPSRMTIAMLLESIAAKGGSLHGKFVDATPFRDAVKKTNGEEESKSSLLVDDLGSMLKEKGFNHYGTETLYSGYLGVELKCEIFMGPVYYQRLRHMVSDKFQVRSTGQVDQLTHQPIKGRKRGGGIRFGEMERDSLLAHGASYLLHDRLHTSSDHHIADVCSLCGSLLTSSVVNVQQKKLIQEIGKLPPGRTPKKVTCYSCKTSKGMETVAMPYVFRYLAAELASMNIKMTLQLSDREGVTD.

A C4-type zinc finger spans residues 1097–1137 (CSLCGSLLTSSVVNVQQKKLIQEIGKLPPGRTPKKVTCYSC).

It belongs to the RNA polymerase beta chain family. As to quaternary structure, component of the RNA polymerase I (Pol I) complex consisting of at least 13 subunits.

The protein localises to the nucleus. It carries out the reaction RNA(n) + a ribonucleoside 5'-triphosphate = RNA(n+1) + diphosphate. In terms of biological role, DNA-dependent RNA polymerase catalyzes the transcription of DNA into RNA using the four ribonucleoside triphosphates as substrates. Second largest core component of RNA polymerase I which synthesizes ribosomal RNA precursors. Proposed to contribute to the polymerase catalytic activity and forms the polymerase active center together with the largest subunit. Pol I is composed of mobile elements and NRPA2 is part of the core element with the central large cleft and probably a clamp element that moves to open and close the cleft. Its function is as follows. Essential for the completion of the three rounds of mitosis in female megaspores required for the development of mature gametophytes. The protein is DNA-directed RNA polymerase I subunit 2 of Arabidopsis thaliana (Mouse-ear cress).